The sequence spans 96 residues: MPTHQCHIIRAVPVVRYVVALLHWLLWRVVVIIAISVPVFHHPFRNLRPCHFRPSWVCNRILRTSSFPMVLPSQHRALPSHQHQHYANLLPIHFTS.

A helical membrane pass occupies residues 13-35; that stretch reads PVVRYVVALLHWLLWRVVVIIAI.

The protein localises to the membrane. This is an uncharacterized protein from Archaeoglobus fulgidus (strain ATCC 49558 / DSM 4304 / JCM 9628 / NBRC 100126 / VC-16).